Consider the following 686-residue polypeptide: Rhophilin-2 (686 aa).

An REM-1 domain is found at 26 to 100 (NPLAQTGRSK…LEGLNISVGV (75 aa)). Positions 46–66 (QILKAVRMRTGAENLLKVATN) are interaction with Rho. The BRO1 domain maps to 111 to 460 (PLIPLGLKET…RLTYAQHQEE (350 aa)). The PDZ domain maps to 515 to 593 (RSIRFTAEEG…DEIEMKVVSL (79 aa)). Thr-655 bears the Phosphothreonine mark.

It belongs to the RHPN family. As to quaternary structure, interacts with GTP-bound RhoA and RhoB. Interacts with both GTP- and GDP-bound RhoA. According to PubMed:12473120, it does not interact with RhoA. Interacts with KRT18. In terms of tissue distribution, widely expressed. Highly expressed in prostate, trachea, stomach, colon, thyroid and pancreas. Expressed at lower level in brain, spinal cord, kidney, placenta and liver.

It is found in the cytoplasm. Its subcellular location is the perinuclear region. Binds specifically to GTP-Rho. May function in a Rho pathway to limit stress fiber formation and/or increase the turnover of F-actin structures in the absence of high levels of RhoA activity. In Homo sapiens (Human), this protein is Rhophilin-2 (RHPN2).